A 388-amino-acid chain; its full sequence is Protein TsgA homolog (388 aa).

Helical transmembrane passes span 11–31 (WISF…GMIM), 50–70 (TFLN…IEII), 77–97 (IFSF…NSIF), 101–121 (INMF…TFII), 133–153 (LLLL…IVTA), 160–180 (IIWY…FLLT), 206–226 (VFLL…FISW), 244–264 (SLVS…SFII), 268–288 (NLYR…YCFI), 298–318 (YIII…ITLA), 332–352 (LILL…SPIV), and 360–380 (TLIS…LIYF).

This sequence belongs to the major facilitator superfamily. TsgA family.

The protein localises to the cell membrane. In Buchnera aphidicola subsp. Acyrthosiphon pisum (strain 5A), this protein is Protein TsgA homolog.